A 387-amino-acid chain; its full sequence is Succinate--CoA ligase [ADP-forming] subunit beta (387 aa).

The ATP-grasp domain maps to 9–244 (KALLQRYGVN…WSQDDAKEAE (236 aa)). ATP contacts are provided by residues K46, 53 to 55 (GRG), E99, L102, and E107. Mg(2+) contacts are provided by N199 and D213. Substrate-binding positions include N264 and 321–323 (GIM).

This sequence belongs to the succinate/malate CoA ligase beta subunit family. Heterotetramer of two alpha and two beta subunits. Mg(2+) serves as cofactor.

The enzyme catalyses succinate + ATP + CoA = succinyl-CoA + ADP + phosphate. The catalysed reaction is GTP + succinate + CoA = succinyl-CoA + GDP + phosphate. The protein operates within carbohydrate metabolism; tricarboxylic acid cycle; succinate from succinyl-CoA (ligase route): step 1/1. Succinyl-CoA synthetase functions in the citric acid cycle (TCA), coupling the hydrolysis of succinyl-CoA to the synthesis of either ATP or GTP and thus represents the only step of substrate-level phosphorylation in the TCA. The beta subunit provides nucleotide specificity of the enzyme and binds the substrate succinate, while the binding sites for coenzyme A and phosphate are found in the alpha subunit. The protein is Succinate--CoA ligase [ADP-forming] subunit beta of Methylobacillus flagellatus (strain ATCC 51484 / DSM 6875 / VKM B-1610 / KT).